Here is a 381-residue protein sequence, read N- to C-terminus: 4-hydroxy-3-methylbut-2-en-1-yl diphosphate synthase (flavodoxin) (381 aa).

Positions 273, 276, 308, and 315 each coordinate [4Fe-4S] cluster.

The protein belongs to the IspG family. Requires [4Fe-4S] cluster as cofactor.

The catalysed reaction is (2E)-4-hydroxy-3-methylbut-2-enyl diphosphate + oxidized [flavodoxin] + H2O + 2 H(+) = 2-C-methyl-D-erythritol 2,4-cyclic diphosphate + reduced [flavodoxin]. Its pathway is isoprenoid biosynthesis; isopentenyl diphosphate biosynthesis via DXP pathway; isopentenyl diphosphate from 1-deoxy-D-xylulose 5-phosphate: step 5/6. Converts 2C-methyl-D-erythritol 2,4-cyclodiphosphate (ME-2,4cPP) into 1-hydroxy-2-methyl-2-(E)-butenyl 4-diphosphate. This Gluconobacter oxydans (strain 621H) (Gluconobacter suboxydans) protein is 4-hydroxy-3-methylbut-2-en-1-yl diphosphate synthase (flavodoxin).